Consider the following 259-residue polypeptide: Imidazole glycerol phosphate synthase subunit HisF (259 aa).

Active-site residues include D11 and D130.

The protein belongs to the HisA/HisF family. As to quaternary structure, heterodimer of HisH and HisF.

It localises to the cytoplasm. The enzyme catalyses 5-[(5-phospho-1-deoxy-D-ribulos-1-ylimino)methylamino]-1-(5-phospho-beta-D-ribosyl)imidazole-4-carboxamide + L-glutamine = D-erythro-1-(imidazol-4-yl)glycerol 3-phosphate + 5-amino-1-(5-phospho-beta-D-ribosyl)imidazole-4-carboxamide + L-glutamate + H(+). It functions in the pathway amino-acid biosynthesis; L-histidine biosynthesis; L-histidine from 5-phospho-alpha-D-ribose 1-diphosphate: step 5/9. IGPS catalyzes the conversion of PRFAR and glutamine to IGP, AICAR and glutamate. The HisF subunit catalyzes the cyclization activity that produces IGP and AICAR from PRFAR using the ammonia provided by the HisH subunit. This Desulfovibrio desulfuricans (strain ATCC 27774 / DSM 6949 / MB) protein is Imidazole glycerol phosphate synthase subunit HisF.